The following is a 408-amino-acid chain: Peptidase T (408 aa).

Position 78 (His78) interacts with Zn(2+). Asp80 is a catalytic residue. Asp140 contributes to the Zn(2+) binding site. Glu173 acts as the Proton acceptor in catalysis. The Zn(2+) site is built by Glu174, Asp196, and His379.

It belongs to the peptidase M20B family. Zn(2+) is required as a cofactor.

It localises to the cytoplasm. The enzyme catalyses Release of the N-terminal residue from a tripeptide.. Functionally, cleaves the N-terminal amino acid of tripeptides. This chain is Peptidase T, found in Escherichia fergusonii (strain ATCC 35469 / DSM 13698 / CCUG 18766 / IAM 14443 / JCM 21226 / LMG 7866 / NBRC 102419 / NCTC 12128 / CDC 0568-73).